Reading from the N-terminus, the 197-residue chain is Phospholipid hydroperoxide glutathione peroxidase (197 aa).

Position 40 is a phosphoserine (Ser-40). The active site involves Sec-73. A non-standard amino acid (selenocysteine) is located at residue Sec-73.

Belongs to the glutathione peroxidase family. In terms of assembly, monomer. Has a tendency to form higher mass oligomers. Interacts with FUNDC1; this interaction promotes GPX4 recruitment into mitochondria through TOM/TIM complex where it is degraded by mitophagy.

It localises to the mitochondrion. The protein localises to the cytoplasm. The enzyme catalyses a hydroperoxy polyunsaturated fatty acid + 2 glutathione = a hydroxy polyunsaturated fatty acid + glutathione disulfide + H2O. It catalyses the reaction (12S)-hydroperoxy-(5Z,8Z,10E,14Z)-eicosatetraenoate + 2 glutathione = (12S)-hydroxy-(5Z,8Z,10E,14Z)-eicosatetraenoate + glutathione disulfide + H2O. The catalysed reaction is (13S)-hydroperoxy-(9Z,11E)-octadecadienoate + 2 glutathione = (13S)-hydroxy-(9Z,11E)-octadecadienoate + glutathione disulfide + H2O. In terms of biological role, essential antioxidant peroxidase that directly reduces phospholipid hydroperoxide even if they are incorporated in membranes and lipoproteins. Can also reduce fatty acid hydroperoxide, cholesterol hydroperoxide and thymine hydroperoxide. Plays a key role in protecting cells from oxidative damage by preventing membrane lipid peroxidation. Required to prevent cells from ferroptosis, a non-apoptotic cell death resulting from an iron-dependent accumulation of lipid reactive oxygen species. The presence of selenocysteine (Sec) versus Cys at the active site is essential for life: it provides resistance to overoxidation and prevents cells against ferroptosis. The presence of Sec at the active site is also essential for the survival of a specific type of parvalbumin-positive interneurons, thereby preventing against fatal epileptic seizures. May be required to protect cells from the toxicity of ingested lipid hydroperoxides. Required for normal sperm development and male fertility. Essential for maturation and survival of photoreceptor cells. Plays a role in a primary T-cell response to viral and parasitic infection by protecting T-cells from ferroptosis and by supporting T-cell expansion. Plays a role of glutathione peroxidase in platelets in the arachidonic acid metabolism. Reduces hydroperoxy ester lipids formed by a 15-lipoxygenase that may play a role as down-regulator of the cellular 15-lipoxygenase pathway. This is Phospholipid hydroperoxide glutathione peroxidase from Sapajus apella (Brown-capped capuchin).